The sequence spans 214 residues: Small ribosomal subunit protein uS5 (214 aa).

An S5 DRBM domain is found at 54-117; that stretch reads LKYEVVDIKV…RDAKMNILPV (64 aa).

The protein belongs to the universal ribosomal protein uS5 family. In terms of assembly, part of the 30S ribosomal subunit. Contacts protein S4.

With S4 and S12 plays an important role in translational accuracy. This Saccharolobus islandicus (strain Y.N.15.51 / Yellowstone #2) (Sulfolobus islandicus) protein is Small ribosomal subunit protein uS5.